The primary structure comprises 254 residues: Bidirectional sugar transporter SWEET6b (254 aa).

Topologically, residues 1 to 9 (MISPDAARN) are extracellular. Residues 10 to 30 (VVGIIGNVISFGLFLAPVPTF) traverse the membrane as a helical segment. Positions 10–98 (VVGIIGNVIS…IFFLYSPNKK (89 aa)) constitute a MtN3/slv 1 domain. Over 31-45 (WRICKRKDVEEFKAD) the chain is Cytoplasmic. Residues 46 to 66 (PYLATLLNCMLWVFYGIPIVH) traverse the membrane as a helical segment. Topologically, residues 67–69 (PNS) are extracellular. A helical membrane pass occupies residues 70-90 (ILVVTINGIGLVVEGTYLFIF). Residues 91–101 (FLYSPNKKRLR) lie on the Cytoplasmic side of the membrane. A helical membrane pass occupies residues 102–122 (MLAVLGVELVFMLAVILGVLL). Residues 123-131 (GAHTHKKRS) are Extracellular-facing. Residues 132 to 152 (MIVGILCVFFGSIMYFSPLTI) form a helical membrane-spanning segment. A MtN3/slv 2 domain is found at 133-216 (IVGILCVFFG…LILYACYYRT (84 aa)). The Cytoplasmic segment spans residues 153–165 (MGKVIKTKSVEYM). A helical transmembrane segment spans residues 166-186 (PFFLSLVCFLNGVCWTAYALI). The Extracellular portion of the chain corresponds to 187-189 (RFD). The helical transmembrane segment at 190 to 210 (IYVTIPNSLGAIFGAIQLILY) threads the bilayer. Topologically, residues 211–254 (ACYYRTTPKKTKAAKDVEMPSVISGPGAAATASGGSVVSVTVER) are cytoplasmic.

It belongs to the SWEET sugar transporter family. Forms homooligomers and/or heterooligomers.

Its subcellular location is the cell membrane. Mediates both low-affinity uptake and efflux of sugar across the plasma membrane. The polypeptide is Bidirectional sugar transporter SWEET6b (SWEET6B) (Oryza sativa subsp. indica (Rice)).